Here is a 150-residue protein sequence, read N- to C-terminus: Large ribosomal subunit protein bL9 (150 aa).

Belongs to the bacterial ribosomal protein bL9 family.

Functionally, binds to the 23S rRNA. The sequence is that of Large ribosomal subunit protein bL9 from Colwellia psychrerythraea (strain 34H / ATCC BAA-681) (Vibrio psychroerythus).